Consider the following 144-residue polypeptide: Ig heavy chain V region M167 (144 aa).

A signal peptide spans 1–19 (MKMWLNWVFLLTLLHGIQC). An Ig-like domain is found at 20 to 133 (EVKVVESGGG…GNSYFGYFDV (114 aa)).

This chain is Ig heavy chain V region M167, found in Mus musculus (Mouse).